The chain runs to 116 residues: U11-theraphotoxin-Hhn1b (116 aa).

A signal peptide spans 1–21 (MNTVRVAFLLVFVLAVSLGQA). The propeptide occupies 22–74 (DKDENRMEMQEKTEQGKSYLDFAENLLLQKLEELEAKLLEEDSEESRNSRQKR). Residues 61-83 (EEDSEESRNSRQKRCIGEGVPCD) are disordered. Intrachain disulfides connect Cys75-Cys90, Cys82-Cys95, and Cys89-Cys110.

Belongs to the neurotoxin 14 (magi-1) family. 01 (HNTX-16) subfamily. Expressed by the venom gland.

It is found in the secreted. Probable ion channel inhibitor. In Cyriopagopus hainanus (Chinese bird spider), this protein is U11-theraphotoxin-Hhn1b.